Reading from the N-terminus, the 1017-residue chain is Voltage-gated delayed rectifier potassium channel KCNH4 (1017 aa).

Over 1 to 228 the chain is Cytoplasmic; that stretch reads MPVMKGLLAP…LLHYSVSKAI (228 aa). Residues 14–90 form the PAS domain; sequence FLDTIATRFD…QRLHKALEGH (77 aa). Residues 93-145 enclose the PAC domain; it reads HRAEICFYRKDGSAFWCLLDMMPIKNEMGEVVLFLFSFKDITQSGSPGLGPQG. Residues 138–157 are disordered; that stretch reads SPGLGPQGGRGDSNHENSLG. Residues 139–148 show a composition bias toward gly residues; sequence PGLGPQGGRG. The helical transmembrane segment at 229 to 249 threads the bilayer; sequence WDGLILLATFYVAVTVPYNVC. Topologically, residues 250 to 259 are extracellular; sequence FSGDDDTPIT. The helical transmembrane segment at 260-280 threads the bilayer; sequence SRHTLVSDIAVEMLFILDIIL. The Cytoplasmic segment spans residues 281–302; sequence NFRTTYVSQSGQVISAPRSIGL. Residues 303–323 traverse the membrane as a helical segment; sequence HYLATWFFIDLIAALPFDLLY. Residues 324 to 332 lie on the Extracellular side of the membrane; that stretch reads IFNITVTSL. The N-linked (GlcNAc...) asparagine glycan is linked to asparagine 326. The chain crosses the membrane as a helical; Voltage-sensor span at residues 333–353; sequence VHLLKTVRLLRLLRLLQKLER. Residues 354–361 lie on the Cytoplasmic side of the membrane; it reads YSQCSAVV. A helical transmembrane segment spans residues 362-382; it reads LTLLMSVFALLAHWMACIWYV. Residues 383-427 are Extracellular-facing; the sequence is IGRREMEANDPLLWDIGWLHELGKRLEVPYVNGSVGGPSRRSAYI. Residue asparagine 414 is glycosylated (N-linked (GlcNAc...) asparagine). Residues 428–448 constitute an intramembrane region (pore-forming); that stretch reads AALYFTLSSLTSVGFGNVCAN. The Selectivity filter signature appears at 439 to 444; the sequence is SVGFGN. At 449-482 the chain is on the extracellular side; sequence TDAEKIFSICTMLIGALMHAVVFGNVTAIIQRMY. A glycan (N-linked (GlcNAc...) asparagine) is linked at asparagine 473. A helical membrane pass occupies residues 483–503; sequence SRRSLYHSRMKDLKDFIRVHR. Residues 504–1017 are Cytoplasmic-facing; that stretch reads LPRPLKQRML…SFQSRSDTFH (514 aa). The tract at residues 556–620 is cNMP-binding domain; it reads LFGAASRGCL…AILGKGDLIG (65 aa). The segment covering 691-724 has biased composition (polar residues); it reads GSDTSGLSRFSRSPRLSQPRSESLGSSSDKTLPS. Disordered regions lie at residues 691 to 749, 772 to 803, 821 to 875, and 971 to 1017; these read GSDT…LPNL, LVSS…RCSA, PDLS…EAEE, and LLDL…DTFH. The span at 772-787 shows a compositional bias: low complexity; the sequence is LVSSPSLSPSLSPALA. Residues 978–1002 show a composition bias toward pro residues; the sequence is ILPPYPSEPDPLGPSPVPEASPPTP. The segment covering 1008 to 1017 has biased composition (polar residues); the sequence is SFQSRSDTFH.

The protein belongs to the potassium channel family. H (Eag) (TC 1.A.1.20) subfamily. Kv12.3/KCNH4 sub-subfamily. As to quaternary structure, the potassium channel is probably composed of a homo- or heterotetrameric complex of pore-forming alpha subunits that can associate with modulating beta subunits. In terms of tissue distribution, detected only in brain, in particular in the telencephalon. Detected in putamen and caudate nucleus, and at lower levels in cerebral cortex, occipital and hippocampus.

It localises to the membrane. The catalysed reaction is K(+)(in) = K(+)(out). Pore-forming (alpha) subunit of a voltage-gated delayed rectifier. Activates at more negative voltages, exhibits fast prepulse-independent activation kinetics and deactivates much more slowly, but shows no inactivation. This is Voltage-gated delayed rectifier potassium channel KCNH4 from Homo sapiens (Human).